The sequence spans 434 residues: Serine/threonine transporter SstT (434 aa).

9 consecutive transmembrane segments (helical) span residues 14 to 34 (IVIG…WSFI), 41 to 61 (FVGA…MSAI), 72 to 92 (FGTV…AAVA), 135 to 155 (ALVE…GSGL), 172 to 192 (TVSA…VGLL), 210 to 230 (LLML…PFMV), 282 to 302 (ISIP…VSIM), 316 to 336 (IFLA…VSGI), and 351 to 371 (FGIS…IGVV). The tract at residues 413–434 (GKGTAEVVTPEKTNEAEESEQV) is disordered.

The protein belongs to the dicarboxylate/amino acid:cation symporter (DAACS) (TC 2.A.23) family.

Its subcellular location is the cell membrane. The catalysed reaction is L-serine(in) + Na(+)(in) = L-serine(out) + Na(+)(out). The enzyme catalyses L-threonine(in) + Na(+)(in) = L-threonine(out) + Na(+)(out). Functionally, involved in the import of serine and threonine into the cell, with the concomitant import of sodium (symport system). The sequence is that of Serine/threonine transporter SstT from Lacticaseibacillus casei (strain BL23) (Lactobacillus casei).